Consider the following 187-residue polypeptide: Elongation factor P (187 aa).

It belongs to the elongation factor P family.

It localises to the cytoplasm. Its pathway is protein biosynthesis; polypeptide chain elongation. Its function is as follows. Involved in peptide bond synthesis. Stimulates efficient translation and peptide-bond synthesis on native or reconstituted 70S ribosomes in vitro. Probably functions indirectly by altering the affinity of the ribosome for aminoacyl-tRNA, thus increasing their reactivity as acceptors for peptidyl transferase. The protein is Elongation factor P of Synechococcus sp. (strain CC9605).